Consider the following 94-residue polypeptide: Cell division topological specificity factor (94 aa).

The protein belongs to the MinE family.

Its function is as follows. Prevents the cell division inhibition by proteins MinC and MinD at internal division sites while permitting inhibition at polar sites. This ensures cell division at the proper site by restricting the formation of a division septum at the midpoint of the long axis of the cell. This chain is Cell division topological specificity factor, found in Beijerinckia indica subsp. indica (strain ATCC 9039 / DSM 1715 / NCIMB 8712).